A 538-amino-acid polypeptide reads, in one-letter code: MRHVQAEPSPSSEPEAGPSQPPVRQGALQGGLLMGYSPAGGATSPGVYQVSIFSPPAGTSEPHRALKRQAPPTEGPRELKRGPGLGAREGLPPEEPSTVGLLGPEGLGLGLGVASQHFSHRGLCVVEQRSSVTSSWTSGAWSPPCPPSNASCNTLHTRDWASPDPGGQGSLGESPGPAPPGQLHTLDTDLHSLAQIGGKSPVAGVGNGGSLWPRESPGTANGHSPEHTPPGPGPPGPCPTKRRLLPAGEAPDVSSEEEGPAPRRRRGSLGHPTAANSSDAKATPFWSHLLPGPKEPVLDPTDCGPMGRRLKGARRLKLSPLRSLRKGPGLLSPPSASPVPTPAVSRTLLGSFEESLLRGRFAPSGHIEGFTAEIGASGSYCPQHVTLPVTVTFFDVSEQNAPAPFLGIVDLNPLGRKGYSVPKVGTIQVTLFNPNQTVVKMFLVTFDFSDMPAAHMTFLRHRLFLVPVGEEGNANPTHRLLCYLLHLRFRSSRSGRLSLHGDIRLLFSRRSLELDTGLPYELQAVTEAPHNPRYSPLP.

The span at 1-18 (MRHVQAEPSPSSEPEAGP) shows a compositional bias: low complexity. 4 disordered regions span residues 1 to 103 (MRHV…GLLG), 153 to 185 (NTLH…QLHT), 197 to 300 (GGKS…VLDP), and 323 to 342 (SLRK…VPTP). A compositionally biased stretch (pro residues) spans 227-238 (HTPPGPGPPGPC). A phosphoserine mark is found at S254 and S255. The segment covering 323–334 (SLRKGPGLLSPP) has biased composition (low complexity). The interval 348 to 430 (LLGSFEESLL…VPKVGTIQVT (83 aa)) is required for macropage invasion. The segment at 436 to 444 (QTVVKMFLV) is transactivation domain 1 (TAD1).

The protein belongs to the ATOS family.

It is found in the nucleus. Transcription regulator that may syncronize transcriptional and translational programs. In Pongo abelii (Sumatran orangutan), this protein is Atos homolog protein B.